A 156-amino-acid polypeptide reads, in one-letter code: Fibroblast growth factor 2 (156 aa).

A propeptide spanning residues 1–9 (MAAGSITTL) is cleaved from the precursor. N37 provides a ligand contact to heparin. Y83 carries the post-translational modification Phosphotyrosine; by TEC. K96 participates in a covalent cross-link: Glycyl lysine isopeptide (Lys-Gly) (interchain with G-Cter in SUMO1). The tract at residues 129–145 (KRTGQYKLGSKTGPGQK) is heparin-binding.

This sequence belongs to the heparin-binding growth factors family. As to quaternary structure, monomer. Homodimer. Interacts with FGFR1, FGFR2, FGFR3 and FGFR4. Affinity between fibroblast growth factors (FGFs) and their receptors is increased by heparan sulfate glycosaminoglycans that function as coreceptors. Interacts with CSPG4, FGFBP1 and TEC. Found in a complex with FGFBP1, FGF1 and FGF2. Interacts with FGFBP3. Interacts with integrin ITGAV:ITGB3; the interaction is required for FGF2 signaling. Interacts with SNORC (via the extracellular domain). Interacts with glypican GPC3. Phosphorylation at Tyr-83 regulates FGF2 unconventional secretion.

The protein resides in the secreted. It is found in the nucleus. Functionally, acts as a ligand for FGFR1, FGFR2, FGFR3 and FGFR4. Also acts as an integrin ligand which is required for FGF2 signaling. Binds to integrin ITGAV:ITGB3. Plays an important role in the regulation of cell survival, cell division, cell differentiation and cell migration. Functions as a potent mitogen in vitro. Can induce angiogenesis. Mediates phosphorylation of ERK1/2 and thereby promotes retinal lens fiber differentiation. The chain is Fibroblast growth factor 2 (FGF2) from Monodelphis domestica (Gray short-tailed opossum).